The chain runs to 602 residues: Elongation factor 4 (602 aa).

A tr-type G domain is found at 8-190 (DLIRNFSIVA…AIVHRLPPPK (183 aa)). Residues 20 to 25 (DHGKST) and 137 to 140 (NKID) contribute to the GTP site.

The protein belongs to the TRAFAC class translation factor GTPase superfamily. Classic translation factor GTPase family. LepA subfamily.

Its subcellular location is the cell inner membrane. It catalyses the reaction GTP + H2O = GDP + phosphate + H(+). Functionally, required for accurate and efficient protein synthesis under certain stress conditions. May act as a fidelity factor of the translation reaction, by catalyzing a one-codon backward translocation of tRNAs on improperly translocated ribosomes. Back-translocation proceeds from a post-translocation (POST) complex to a pre-translocation (PRE) complex, thus giving elongation factor G a second chance to translocate the tRNAs correctly. Binds to ribosomes in a GTP-dependent manner. This is Elongation factor 4 from Cereibacter sphaeroides (strain ATCC 17029 / ATH 2.4.9) (Rhodobacter sphaeroides).